The primary structure comprises 122 residues: Large ribosomal subunit protein uL14 (122 aa).

The protein belongs to the universal ribosomal protein uL14 family. As to quaternary structure, part of the 50S ribosomal subunit. Forms a cluster with proteins L3 and L19. In the 70S ribosome, L14 and L19 interact and together make contacts with the 16S rRNA in bridges B5 and B8.

Binds to 23S rRNA. Forms part of two intersubunit bridges in the 70S ribosome. This chain is Large ribosomal subunit protein uL14, found in Laribacter hongkongensis (strain HLHK9).